Reading from the N-terminus, the 81-residue chain is MIDDHEALLLLVLSSGPAALASLPLHPVLGKGYRNTPGALEEKAVRISCVRECLNVVQIGGRIPVLLTSAAELPRLGSCVR.

Residues 1–20 (MIDDHEALLLLVLSSGPAAL) form the signal peptide.

This is an uncharacterized protein from Treponema pallidum (strain Nichols).